The sequence spans 333 residues: Anthranilate phosphoribosyltransferase (333 aa).

5-phospho-alpha-D-ribose 1-diphosphate contacts are provided by residues G81, 84-85 (GN), T89, 91-94 (NIST), 109-117 (KHGNRSVSS), and A121. Residue G81 coordinates anthranilate. Position 93 (S93) interacts with Mg(2+). Position 112 (N112) interacts with anthranilate. Anthranilate is bound at residue R167. Mg(2+) is bound by residues D225 and E226.

The protein belongs to the anthranilate phosphoribosyltransferase family. In terms of assembly, homodimer. The cofactor is Mg(2+).

The enzyme catalyses N-(5-phospho-beta-D-ribosyl)anthranilate + diphosphate = 5-phospho-alpha-D-ribose 1-diphosphate + anthranilate. It participates in amino-acid biosynthesis; L-tryptophan biosynthesis; L-tryptophan from chorismate: step 2/5. Its function is as follows. Catalyzes the transfer of the phosphoribosyl group of 5-phosphorylribose-1-pyrophosphate (PRPP) to anthranilate to yield N-(5'-phosphoribosyl)-anthranilate (PRA). The chain is Anthranilate phosphoribosyltransferase from Haemophilus influenzae (strain ATCC 51907 / DSM 11121 / KW20 / Rd).